The primary structure comprises 793 residues: Phenylalanine--tRNA ligase beta subunit (793 aa).

Residues 39-148 (AGQFTHVIVA…DEAPIGMDLR (110 aa)) enclose the tRNA-binding domain. The 77-residue stretch at 401–477 (PGTVSFLFDT…RLYGYDKLQA (77 aa)) folds into the B5 domain. Mg(2+)-binding residues include Asp-455, Asp-461, Glu-464, and Glu-465. The 95-residue stretch at 698–792 (SKYPQIRRDL…LENEFSILLR (95 aa)) folds into the FDX-ACB domain.

This sequence belongs to the phenylalanyl-tRNA synthetase beta subunit family. Type 1 subfamily. In terms of assembly, tetramer of two alpha and two beta subunits. Requires Mg(2+) as cofactor.

The protein localises to the cytoplasm. It carries out the reaction tRNA(Phe) + L-phenylalanine + ATP = L-phenylalanyl-tRNA(Phe) + AMP + diphosphate + H(+). This is Phenylalanine--tRNA ligase beta subunit from Legionella pneumophila (strain Lens).